Here is a 514-residue protein sequence, read N- to C-terminus: MIKRALISVSDKTGIVEMARELQSMGVDIISTGGTAKTLSDAGIKVINISDVTGFPECLDGRVKTLHPKVHAGILAIRSNEEHMRQLKELNIETIDMVIINLYPFKQTILKENVDLSEAIENIDIGGPTMIRAAAKNYQDVVVIVDPSDYAAVLEELKTTKDVSLKTKFKLAYKVFEHTSHYDTLIAKYLREQIGEDEFPQTLSLTFEKVQDMRYGENPHQKAVFYKEVGANVGCITAAKQLHGKELSYNNINDANGAIEIIKEFDEPTVVAVKHANPCGVASASNIYDAYIKAYEADPVSIFGGIIAANREIDEKTAEEINKIFVEIVIAPSFTEGALKILTQKKNIRLLQLEDISAKIPKGTYDMKKVPGGLLVQNYNSELLNMDDLKVVTEKKPTQEELEDLIFAMKVVKHTKSNGIALAKGKQTIGVGPGQTNRVTACKIAIEYGGERTKGAVLASDAFFPFADCVEAAAAAGITAIIQPGGSIRDQESIDACNKYGIAMVFTGMRHFKH.

Residues 1–145 (MIKRALISVS…KNYQDVVVIV (145 aa)) form the MGS-like domain.

This sequence belongs to the PurH family.

The catalysed reaction is (6R)-10-formyltetrahydrofolate + 5-amino-1-(5-phospho-beta-D-ribosyl)imidazole-4-carboxamide = 5-formamido-1-(5-phospho-D-ribosyl)imidazole-4-carboxamide + (6S)-5,6,7,8-tetrahydrofolate. It catalyses the reaction IMP + H2O = 5-formamido-1-(5-phospho-D-ribosyl)imidazole-4-carboxamide. Its pathway is purine metabolism; IMP biosynthesis via de novo pathway; 5-formamido-1-(5-phospho-D-ribosyl)imidazole-4-carboxamide from 5-amino-1-(5-phospho-D-ribosyl)imidazole-4-carboxamide (10-formyl THF route): step 1/1. The protein operates within purine metabolism; IMP biosynthesis via de novo pathway; IMP from 5-formamido-1-(5-phospho-D-ribosyl)imidazole-4-carboxamide: step 1/1. This chain is Bifunctional purine biosynthesis protein PurH, found in Acetivibrio thermocellus (strain ATCC 27405 / DSM 1237 / JCM 9322 / NBRC 103400 / NCIMB 10682 / NRRL B-4536 / VPI 7372) (Clostridium thermocellum).